A 319-amino-acid polypeptide reads, in one-letter code: L-galactose dehydrogenase (319 aa).

The Proton donor role is filled by Tyr-59. The SIS domain occupies 122-269 (HCHDIEFGSL…ANKEISSVLV (148 aa)). A substrate-binding site is contributed by His-124.

Belongs to the aldo/keto reductase family.

The catalysed reaction is L-galactose + NAD(+) = L-galactono-1,4-lactone + NADH + H(+). In terms of biological role, catalyzes the oxidation of L-galactose to L-galactono-1,4-lactone in the presence of NAD(+). Uses NAD(+) as a hydrogen acceptor much more efficiently than NADP(+). This Arabidopsis thaliana (Mouse-ear cress) protein is L-galactose dehydrogenase (LGALDH).